Reading from the N-terminus, the 213-residue chain is Riboflavin/roseoflavin transporter RibM (213 aa).

5 helical membrane-spanning segments follow: residues 15-35, 38-58, 107-129, 136-158, and 171-193; these read HIIW…ALGF, SLWT…AFYG, IAAA…SLSW, YIFV…FWFA, and FANG…LWGM.

It belongs to the nicotinamide ribonucleoside (NR) uptake permease (TC 4.B.1) family.

The protein resides in the cell membrane. Transports riboflavin and roseoflavin. Can also transport FMN and FAD. May confer roseoflavin resistance to S.davawensis, which naturally produces this antibiotic during stationary growth phase. In Streptomyces davaonensis (strain DSM 101723 / JCM 4913 / KCC S-0913 / 768), this protein is Riboflavin/roseoflavin transporter RibM.